Here is a 185-residue protein sequence, read N- to C-terminus: Elongation factor P (185 aa).

The protein belongs to the elongation factor P family.

It is found in the cytoplasm. It participates in protein biosynthesis; polypeptide chain elongation. Its function is as follows. Involved in peptide bond synthesis. Stimulates efficient translation and peptide-bond synthesis on native or reconstituted 70S ribosomes in vitro. Probably functions indirectly by altering the affinity of the ribosome for aminoacyl-tRNA, thus increasing their reactivity as acceptors for peptidyl transferase. This is Elongation factor P from Burkholderia vietnamiensis (strain G4 / LMG 22486) (Burkholderia cepacia (strain R1808)).